A 251-amino-acid polypeptide reads, in one-letter code: Probable ATP-dependent transporter ycf16 (251 aa).

Residues 6-250 (LEIKDLYASV…EKHGYDWITQ (245 aa)) form the ABC transporter domain. 38–45 (GPNGSGKS) lines the ATP pocket.

Belongs to the ABC transporter superfamily. Ycf16 family.

It localises to the plastid. The protein localises to the chloroplast. The polypeptide is Probable ATP-dependent transporter ycf16 (ycf16) (Pyropia yezoensis (Susabi-nori)).